The sequence spans 141 residues: MEQTLSIIKPDSVGKAHIGEIIAIFEKSGFRIAAMKMLHLSVKEAEGFYAVHKSRPFFQELVDFMISGPVVVMVLEGNNAVARNREIMGATNPQEAAPGTIRAQFGESIGINAVHGSDSLENAAIEINYFFSKVEIVNSAA.

Residues Lys-9, Phe-57, Arg-85, Thr-91, Arg-102, and Asn-112 each coordinate ATP. Residue His-115 is the Pros-phosphohistidine intermediate of the active site.

The protein belongs to the NDK family. As to quaternary structure, homotetramer. It depends on Mg(2+) as a cofactor.

The protein localises to the cytoplasm. It catalyses the reaction a 2'-deoxyribonucleoside 5'-diphosphate + ATP = a 2'-deoxyribonucleoside 5'-triphosphate + ADP. It carries out the reaction a ribonucleoside 5'-diphosphate + ATP = a ribonucleoside 5'-triphosphate + ADP. Functionally, major role in the synthesis of nucleoside triphosphates other than ATP. The ATP gamma phosphate is transferred to the NDP beta phosphate via a ping-pong mechanism, using a phosphorylated active-site intermediate. The chain is Nucleoside diphosphate kinase from Chlamydia abortus (strain DSM 27085 / S26/3) (Chlamydophila abortus).